A 391-amino-acid chain; its full sequence is Ferrochelatase (391 aa).

The Fe cation site is built by histidine 196 and glutamate 281.

This sequence belongs to the ferrochelatase family.

It is found in the cytoplasm. It carries out the reaction heme b + 2 H(+) = protoporphyrin IX + Fe(2+). The protein operates within porphyrin-containing compound metabolism; protoheme biosynthesis; protoheme from protoporphyrin-IX: step 1/1. Functionally, catalyzes the ferrous insertion into protoporphyrin IX. In Prochlorococcus marinus (strain SARG / CCMP1375 / SS120), this protein is Ferrochelatase.